A 387-amino-acid chain; its full sequence is Phosphoglycerate kinase (387 aa).

Residues 21–23, Arg-36, 59–62, Arg-113, and Arg-146 contribute to the substrate site; these read DLN and HLGR. ATP contacts are provided by residues Lys-197, Glu-314, and 340-343; that span reads GGDT.

This sequence belongs to the phosphoglycerate kinase family. Monomer.

Its subcellular location is the cytoplasm. It catalyses the reaction (2R)-3-phosphoglycerate + ATP = (2R)-3-phospho-glyceroyl phosphate + ADP. It participates in carbohydrate degradation; glycolysis; pyruvate from D-glyceraldehyde 3-phosphate: step 2/5. The polypeptide is Phosphoglycerate kinase (Pseudomonas syringae pv. tomato (strain ATCC BAA-871 / DC3000)).